Reading from the N-terminus, the 473-residue chain is T-box transcription factor TBX6L (473 aa).

Residues 43 to 217 (LWDKFSSIGT…NNPFAKGFRD (175 aa)) constitute a DNA-binding region (T-box). Positions 342–361 (RLNPQETHHNSRPKIQLQPP) are disordered.

As to expression, exclusively expressed by ventral mesendoderm.

Its subcellular location is the nucleus. Probable transcriptional regulator involved in developmental processes. This is T-box transcription factor TBX6L (tbx6l) from Danio rerio (Zebrafish).